Reading from the N-terminus, the 128-residue chain is Nanos homolog 1 (128 aa).

An essential for its translational repressor activity region spans residues 7 to 23; the sequence is FNSWSDYLGLSSLISRG. The segment at 23 to 58 is disordered; it reads GLQPREGGESPRPRWKASSPTPAEPLPSKAAEAHGH. The segment at 60–114 adopts a Nanos-type zinc-finger fold; sequence GCGFCRSNREAQSLYSSHRLRAPDGRVLCPVLRGYTCPLCGANGDWAHTMRYCPL. Zn(2+) contacts are provided by Cys-61, Cys-64, His-77, Cys-88, Cys-96, Cys-99, His-107, and Cys-112. 2 short sequence motifs (C2HC) span residues 61-88 and 96-112; these read CGFC…RVLC and CPLC…MRYC.

This sequence belongs to the nanos family. As to quaternary structure, interacts with ccnb1.

It localises to the cytoplasm. Its subcellular location is the perinuclear region. Functionally, acts as a translational repressor. Can mediate repression affecting different steps in the translation process: cap-driven, IRES-driven, polyadenylated RNAs or nonpolyadenylated RNAs. Essential for the development of primordial germ cells (PGCs) by ensuring their proper migration and survival. The chain is Nanos homolog 1 (nanos1) from Xenopus tropicalis (Western clawed frog).